The following is a 424-amino-acid chain: Chloroquine resistance transporter (424 aa).

At 1–58 the chain is on the cytoplasmic side; it reads MKFASKKNNQKNSSKNDERYRELDNLVQEGNGSRLGGGSCLGKCAHVFKLIFKEIKDN. A helical membrane pass occupies residues 59 to 79; sequence IFIYILSIIYLSVCVMNKIFA. Topologically, residues 80 to 90 are vacuolar; that stretch reads KRTLNKIGNYS. Asn88 carries N-linked (GlcNAc...) asparagine glycosylation. Residues 91–111 form a helical membrane-spanning segment; that stretch reads FVTSETHNFICMIMFFIVYSL. The Cytoplasmic portion of the chain corresponds to 112 to 127; that stretch reads FGNKKGNSKERHRSFN. The helical transmembrane segment at 128-148 threads the bilayer; that stretch reads LQFFAISMLDACSVILAFIGL. Over 149–154 the chain is Vacuolar; the sequence is TRTTGN. The chain crosses the membrane as a helical span at residues 155 to 175; sequence IQSFVLQLSIPINMFFCFLIL. Residues 176 to 178 lie on the Cytoplasmic side of the membrane; the sequence is RYR. Residues 179–199 form a helical membrane-spanning segment; that stretch reads YHLYNYLGAVIIVVTIALVEM. The Vacuolar segment spans residues 200 to 209; that stretch reads KLSFETQEEN. A helical membrane pass occupies residues 210–230; it reads SIIFNLVLISALIPVCFSNMT. Topologically, residues 231-248 are cytoplasmic; the sequence is REIVFKKYKIDILRLNAM. A helical membrane pass occupies residues 249–269; that stretch reads VSFFQLFTSCLILPVYTLPFL. The Vacuolar segment spans residues 270-317; it reads KQLHLPYNEIWTNIKNGFACLFLGRNTVVENCGLGMAKLCDDCDGAWK. Cystine bridges form between Cys289-Cys312 and Cys301-Cys309. Residues 318–338 form a helical membrane-spanning segment; it reads TFALFSFFNICDNLITSYIID. Residues 339–346 lie on the Cytoplasmic side of the membrane; it reads KFSTMTYT. A helical transmembrane segment spans residues 347–367; the sequence is IVSCIQGPAIAIAYYFKFLAG. Over 368–377 the chain is Vacuolar; it reads DVVREPRLLD. A helical transmembrane segment spans residues 378–398; that stretch reads FVTLFGYLFGSIIYRVGNIIL. Residues 399–424 lie on the Cytoplasmic side of the membrane; sequence ERKKMRNEENEDSEGELTNVDSIITQ.

This sequence belongs to the CRT-like transporter family. As to quaternary structure, monomer.

Its subcellular location is the vacuole membrane. It carries out the reaction L-arginine(in) = L-arginine(out). The enzyme catalyses L-lysine(in) = L-lysine(out). It catalyses the reaction L-histidine(out) = L-histidine(in). The catalysed reaction is histamine(out) = histamine(in). It carries out the reaction spermidine(in) = spermidine(out). The enzyme catalyses Fe(3+)(in) = Fe(3+)(out). It catalyses the reaction Fe(2+)(in) = Fe(2+)(out). With respect to regulation, transporter activity is trans-stimulated by host-derived peptides containing 4-11 amino acids. Trans-stimulation by hemoglobin-derived peptide VDPVNF is pH-dependent and sodium-independent. Saquinavir trans-stimulates transport of hemoglobin-derived peptide VDPVNF. Protons are non-competitive inhibitors of chloroquine transport. Nutrient transporter. Substrate transport is pH-dependent. Can transport arginine, lysine, histidine, peptides, histamine and spermidine. May modulate activity of endogenous transporters. Involved in maintaining the osmotic homeostasis of the digestive vacuole. Required for the asexual intraerythrocytic proliferation of parasites. Can transport Fe(2+) and Fe(3+). The chain is Chloroquine resistance transporter from Plasmodium falciparum.